Consider the following 619-residue polypeptide: Dihydroxy-acid dehydratase (619 aa).

Asp81 is a binding site for Mg(2+). Cys122 provides a ligand contact to [2Fe-2S] cluster. Residues Asp123 and Lys124 each coordinate Mg(2+). Lys124 is subject to N6-carboxylysine. Cys195 contributes to the [2Fe-2S] cluster binding site. Residue Glu494 coordinates Mg(2+). The Proton acceptor role is filled by Ser520.

It belongs to the IlvD/Edd family. In terms of assembly, homodimer. Requires [2Fe-2S] cluster as cofactor. It depends on Mg(2+) as a cofactor.

The catalysed reaction is (2R)-2,3-dihydroxy-3-methylbutanoate = 3-methyl-2-oxobutanoate + H2O. It carries out the reaction (2R,3R)-2,3-dihydroxy-3-methylpentanoate = (S)-3-methyl-2-oxopentanoate + H2O. The protein operates within amino-acid biosynthesis; L-isoleucine biosynthesis; L-isoleucine from 2-oxobutanoate: step 3/4. Its pathway is amino-acid biosynthesis; L-valine biosynthesis; L-valine from pyruvate: step 3/4. In terms of biological role, functions in the biosynthesis of branched-chain amino acids. Catalyzes the dehydration of (2R,3R)-2,3-dihydroxy-3-methylpentanoate (2,3-dihydroxy-3-methylvalerate) into 2-oxo-3-methylpentanoate (2-oxo-3-methylvalerate) and of (2R)-2,3-dihydroxy-3-methylbutanoate (2,3-dihydroxyisovalerate) into 2-oxo-3-methylbutanoate (2-oxoisovalerate), the penultimate precursor to L-isoleucine and L-valine, respectively. This Shewanella sp. (strain MR-7) protein is Dihydroxy-acid dehydratase.